Reading from the N-terminus, the 152-residue chain is Transcriptional regulator MraZ (152 aa).

SpoVT-AbrB domains are found at residues 5–52 and 81–124; these read ATMV…TLPA and ASEC…DEQT.

It belongs to the MraZ family. As to quaternary structure, forms oligomers.

The protein localises to the cytoplasm. It is found in the nucleoid. Its function is as follows. Negatively regulates its own expression and that of the subsequent genes in the proximal part of the division and cell wall (dcw) gene cluster. Acts by binding directly to DNA. May also regulate the expression of genes outside the dcw cluster. The protein is Transcriptional regulator MraZ of Yersinia enterocolitica serotype O:8 / biotype 1B (strain NCTC 13174 / 8081).